The chain runs to 270 residues: 5'-AMP-activated protein kinase subunit beta-1 (270 aa).

The interval 1–43 (MGNTSSERAALERQAGHKTPRRDSSGGTKDGDRPKILMDSPED) is disordered. G2 is lipidated: N-myristoyl glycine. Phosphothreonine is present on T4. Residues S5 and S6 each carry the phosphoserine modification. The segment covering 9-36 (AALERQAGHKTPRRDSSGGTKDGDRPKI) has biased composition (basic and acidic residues). The residue at position 19 (T19) is a Phosphothreonine. S24 and S25 each carry phosphoserine; by autocatalysis. A phosphoserine mark is found at S40, S96, and S101. Positions 68–163 (EVNEKAPAQA…QVKKTDFEVF (96 aa)) are glycogen-binding domain. At S108 the chain carries Phosphoserine; by autocatalysis. Position 148 is a phosphothreonine (T148). Residue S182 is modified to Phosphoserine. At K201 the chain carries N6-succinyllysine.

Belongs to the 5'-AMP-activated protein kinase beta subunit family. In terms of assembly, AMPK is a heterotrimer of an alpha catalytic subunit (PRKAA1 or PRKAA2), a beta (PRKAB1 or PRKAB2) and a gamma non-catalytic subunits (PRKAG1, PRKAG2 or PRKAG3). Interacts with FNIP1 and FNIP2. In terms of processing, phosphorylated when associated with the catalytic subunit (PRKAA1 or PRKAA2). Phosphorylated by ULK1; leading to negatively regulate AMPK activity and suggesting the existence of a regulatory feedback loop between ULK1 and AMPK. As to expression, highly expressed in kidney, heart, white adipose tissue, lung and spleen.

Its function is as follows. Non-catalytic subunit of AMP-activated protein kinase (AMPK), an energy sensor protein kinase that plays a key role in regulating cellular energy metabolism. In response to reduction of intracellular ATP levels, AMPK activates energy-producing pathways and inhibits energy-consuming processes: inhibits protein, carbohydrate and lipid biosynthesis, as well as cell growth and proliferation. AMPK acts via direct phosphorylation of metabolic enzymes, and by longer-term effects via phosphorylation of transcription regulators. Also acts as a regulator of cellular polarity by remodeling the actin cytoskeleton; probably by indirectly activating myosin. Beta non-catalytic subunit acts as a scaffold on which the AMPK complex assembles, via its C-terminus that bridges alpha (PRKAA1 or PRKAA2) and gamma subunits (PRKAG1, PRKAG2 or PRKAG3). This is 5'-AMP-activated protein kinase subunit beta-1 (Prkab1) from Rattus norvegicus (Rat).